The primary structure comprises 428 residues: Probable mitochondrial adenine nucleotide transporter BTL3 (428 aa).

3 Solcar repeats span residues 129 to 212 (LNTT…YRGQ), 222 to 307 (TTNF…LKSA), and 336 to 421 (LGPM…MKVV). The next 6 helical transmembrane spans lie at 132–152 (TKHL…IAPL), 187–207 (GNLV…YAYD), 228–248 (FVAG…LDTI), 283–303 (LVPS…VYDI), 342–362 (LLYG…FEVV), and 390–410 (VPAL…SAAI).

Belongs to the mitochondrial carrier (TC 2.A.29) family.

Its subcellular location is the mitochondrion inner membrane. Functionally, probable mitochondrial adenylate carrier that catalyzes the transport of ATP, ADP and AMP. The chain is Probable mitochondrial adenine nucleotide transporter BTL3 from Arabidopsis thaliana (Mouse-ear cress).